The sequence spans 537 residues: MTKFIFVTGGVVSGLGKGITSASIGLLMKARGYKTTNIKIDPYINYDAGTMNPYQHGEVFVLDDGGEVDLDLGNYERFLDTNLTFEHNITTGKVYSTVIEKERRGEYLGATVQVIPHITDEIKRRIREIAKDYDIVVVEIGGTVGDIESMPFLEAARQMQLEEGRENVAFVHVTYVPKLKVVGEQKTKPTQHSVKELRSLGIQPDAIVARSEDPLEEEARKKISLFTNVPREAVVSAYDVEDTYEVPLLLEREGLGKYLIKRLKLEDREPDLREWEKMVAKYKALKETVEIAIVGKYVKLTDSYLSIKEALKHASVSNDVKVKIRWIEAEDIEEHGTKLLEGVDGIIVPGGFGARGAEGKIMTIKYARENDIPFLGICFGFQLTVVEFARNVLGMKGAHSTEIDPQTPYPVVDLMPEQRNLEKLGGTMRLGAYPVKIKKGTLAYRLYKKELVYERHRHRWEVNPDYIEAFEKAGLVFSGVAGDDERRMEILELPDKRYFIATQFHPEFKSRPMRPAPVFHGLVRAAKEYKQEKNATN.

Positions 1–265 (MTKFIFVTGG…GKYLIKRLKL (265 aa)) are amidoligase domain. Residue Ser-13 coordinates CTP. Ser-13 lines the UTP pocket. An ATP-binding site is contributed by 14-19 (GLGKGI). Tyr-54 contributes to the L-glutamine binding site. An ATP-binding site is contributed by Asp-71. The Mg(2+) site is built by Asp-71 and Glu-139. Residues 146 to 148 (DIE), 186 to 191 (KTKPTQ), and Lys-222 contribute to the CTP site. Residues 186-191 (KTKPTQ) and Lys-222 contribute to the UTP site. The Glutamine amidotransferase type-1 domain maps to 290–532 (EIAIVGKYVK…VRAAKEYKQE (243 aa)). Residue Gly-351 participates in L-glutamine binding. Cys-378 (nucleophile; for glutamine hydrolysis) is an active-site residue. Residues 379 to 382 (FGFQ), Glu-402, and Arg-459 contribute to the L-glutamine site. Catalysis depends on residues His-505 and Glu-507.

The protein belongs to the CTP synthase family. Homotetramer.

It carries out the reaction UTP + L-glutamine + ATP + H2O = CTP + L-glutamate + ADP + phosphate + 2 H(+). It catalyses the reaction L-glutamine + H2O = L-glutamate + NH4(+). The catalysed reaction is UTP + NH4(+) + ATP = CTP + ADP + phosphate + 2 H(+). It participates in pyrimidine metabolism; CTP biosynthesis via de novo pathway; CTP from UDP: step 2/2. With respect to regulation, allosterically activated by GTP, when glutamine is the substrate; GTP has no effect on the reaction when ammonia is the substrate. The allosteric effector GTP functions by stabilizing the protein conformation that binds the tetrahedral intermediate(s) formed during glutamine hydrolysis. Inhibited by the product CTP, via allosteric rather than competitive inhibition. Functionally, catalyzes the ATP-dependent amination of UTP to CTP with either L-glutamine or ammonia as the source of nitrogen. Regulates intracellular CTP levels through interactions with the four ribonucleotide triphosphates. This is CTP synthase from Pyrococcus horikoshii (strain ATCC 700860 / DSM 12428 / JCM 9974 / NBRC 100139 / OT-3).